A 508-amino-acid polypeptide reads, in one-letter code: Photosystem II CP47 reaction center protein (508 aa).

Transmembrane regions (helical) follow at residues 21 to 36 (SVHIMHTALVAGWAGS), 101 to 115 (IVFSGLCFLAAIWHW), 140 to 156 (GIHLFLSGVACFGFGAF), 203 to 218 (IAAGTLGILAGLFHLS), 237 to 252 (VLSSSIAAVFFAAFVV), and 457 to 472 (SFALLFFFGHIWHGSR).

Belongs to the PsbB/PsbC family. PsbB subfamily. In terms of assembly, PSII is composed of 1 copy each of membrane proteins PsbA, PsbB, PsbC, PsbD, PsbE, PsbF, PsbH, PsbI, PsbJ, PsbK, PsbL, PsbM, PsbT, PsbX, PsbY, PsbZ, Psb30/Ycf12, at least 3 peripheral proteins of the oxygen-evolving complex and a large number of cofactors. It forms dimeric complexes. Requires Binds multiple chlorophylls. PSII binds additional chlorophylls, carotenoids and specific lipids. as cofactor.

Its subcellular location is the plastid. It localises to the chloroplast thylakoid membrane. One of the components of the core complex of photosystem II (PSII). It binds chlorophyll and helps catalyze the primary light-induced photochemical processes of PSII. PSII is a light-driven water:plastoquinone oxidoreductase, using light energy to abstract electrons from H(2)O, generating O(2) and a proton gradient subsequently used for ATP formation. The chain is Photosystem II CP47 reaction center protein from Capsella bursa-pastoris (Shepherd's purse).